The primary structure comprises 1044 residues: Elongation factor 3B (1044 aa).

N-acetylserine is present on Ser2. The HEAT 1 repeat unit spans residues 5-42; that stretch reads QQSITVLEELFRKLETATSETREGISSELSSFLNGNII. 3 residues coordinate ADP: Ile42, His44, and Ser83. HEAT repeat units follow at residues 86 to 123, 124 to 162, 166 to 203, 205 to 241, 242 to 279, and 285 to 323; these read PYIV…AVNP, VAVK…AAKE, LRMP…TVDN, DIER…EVTP, ATLS…LVED, and PFLG…VGNV. N6,N6,N6-trimethyllysine occurs at positions 187 and 196. Positions 392, 396, and 397 each coordinate ADP. ABC transporter domains follow at residues 426-641 and 667-993; these read DEGE…YYEL and VKVS…KKEE. Asn703 provides a ligand contact to ADP. At Lys789 the chain carries N6,N6,N6-trimethyllysine. 3 residues coordinate ADP: Glu922, Asn925, and His951. Phosphothreonine is present on Thr972. Ser974 carries the post-translational modification Phosphoserine. The interval 975-1044 is disordered; the sequence is GHNWVAGQGA…DEYVSSDEDF (70 aa). Basic and acidic residues predominate over residues 987-999; sequence RIEKKEEEGDKFD. Over residues 1020–1031 the composition is skewed to basic residues; sequence RKKKKERMKKKK. 2 positions are modified to phosphoserine: Ser1039 and Ser1040.

This sequence belongs to the ABC transporter superfamily. ABCF family. EF3 subfamily. As to quaternary structure, monomer.

It localises to the cytoplasm. It catalyses the reaction ATP + H2O = ADP + phosphate + H(+). The protein operates within protein biosynthesis; polypeptide chain elongation. Its function is as follows. Ribosome-dependent ATPase that promotes the translation of proteins required for detoxification of reactive oxygen species. Required for the ATP-dependent release of deacylated tRNA from the ribosomal E-site during protein biosynthesis. Stimulates the eEF1A-dependent binding of aminoacyl-tRNA to the ribosomal A-site, which has reduced affinity for tRNA as long as the E-site is occupied. Assists translation termination by stimulating the release of nascent protein from the ribosome by release factors. This Saccharomyces cerevisiae (strain ATCC 204508 / S288c) (Baker's yeast) protein is Elongation factor 3B.